Here is a 64-residue protein sequence, read N- to C-terminus: MAKSKGARIIVTLECTECRTNPDKRSPGVSRYTSTKNRRNTTNRLELKKFCTHCNKHTVHKEIK.

This sequence belongs to the bacterial ribosomal protein bL33 family.

The sequence is that of Large ribosomal subunit protein bL33 from Nostoc sp. (strain PCC 7120 / SAG 25.82 / UTEX 2576).